The chain runs to 1125 residues: Phytochrome A (1125 aa).

Composition is skewed to low complexity over residues 1-14 (MSSSRPSHSSSNSA) and 39-48 (SGSSFDYSSS). 2 disordered regions span residues 1–22 (MSSSRPSHSSSNSARSRHSARI) and 38–64 (ESGSSFDYSSSVRVTDSVGGDQPPRSD). Residues 218-401 (SMERLCDTMV…VFAIHVNKEL (184 aa)) form the GAF domain. Cysteine 323 is a binding site for phytochromobilin. PAS domains follow at residues 617–687 (VTSE…LQGK) and 750–821 (DYKA…VNLG). Residues 901-1117 (YLKKQIWNPL…SFIISVELAG (217 aa)) enclose the Histidine kinase domain.

The protein belongs to the phytochrome family. Homodimer. Post-translationally, contains one covalently linked phytochromobilin chromophore.

Functionally, regulatory photoreceptor which exists in two forms that are reversibly interconvertible by light: the Pr form that absorbs maximally in the red region of the spectrum and the Pfr form that absorbs maximally in the far-red region. Photoconversion of Pr to Pfr induces an array of morphogenic responses, whereas reconversion of Pfr to Pr cancels the induction of those responses. Pfr controls the expression of a number of nuclear genes including those encoding the small subunit of ribulose-bisphosphate carboxylase, chlorophyll A/B binding protein, protochlorophyllide reductase, rRNA, etc. It also controls the expression of its own gene(s) in a negative feedback fashion. This is Phytochrome A (PHYA) from Populus tremuloides (Quaking aspen).